A 268-amino-acid chain; its full sequence is Bis(5'-nucleosyl)-tetraphosphatase, symmetrical (268 aa).

The protein belongs to the Ap4A hydrolase family.

The catalysed reaction is P(1),P(4)-bis(5'-adenosyl) tetraphosphate + H2O = 2 ADP + 2 H(+). Functionally, hydrolyzes diadenosine 5',5'''-P1,P4-tetraphosphate to yield ADP. This Vibrio parahaemolyticus serotype O3:K6 (strain RIMD 2210633) protein is Bis(5'-nucleosyl)-tetraphosphatase, symmetrical.